The sequence spans 206 residues: FMN-dependent NADH:quinone oxidoreductase (206 aa).

Residues 15-17 (SVS), 94-97 (MYNF), and 138-141 (TRGG) contribute to the FMN site.

This sequence belongs to the azoreductase type 1 family. Homodimer. FMN serves as cofactor.

The catalysed reaction is 2 a quinone + NADH + H(+) = 2 a 1,4-benzosemiquinone + NAD(+). It catalyses the reaction N,N-dimethyl-1,4-phenylenediamine + anthranilate + 2 NAD(+) = 2-(4-dimethylaminophenyl)diazenylbenzoate + 2 NADH + 2 H(+). Quinone reductase that provides resistance to thiol-specific stress caused by electrophilic quinones. Its function is as follows. Also exhibits azoreductase activity. Catalyzes the reductive cleavage of the azo bond in aromatic azo compounds to the corresponding amines. The polypeptide is FMN-dependent NADH:quinone oxidoreductase (Sinorhizobium fredii (strain NBRC 101917 / NGR234)).